Here is a 225-residue protein sequence, read N- to C-terminus: Transmembrane protein 40 (225 aa).

Residue methionine 1 is modified to N-acetylmethionine. The segment covering 1–14 (MEASGSSSQSQDSG) has biased composition (low complexity). Residues 1–96 (MEASGSSSQS…RRDSLRGADH (96 aa)) are disordered. The span at 15-29 (GVHRETEDHYQETEL) shows a compositional bias: basic and acidic residues. A compositionally biased stretch (basic residues) spans 30-39 (HKHHGKARER). Over residues 46–68 (SSSSSSSSSSSSSSSSSSSSSSD) the composition is skewed to low complexity. The span at 78–87 (GPRKHRRRPR) shows a compositional bias: basic residues. Serine 129 is modified (phosphoserine). The next 2 membrane-spanning stretches (helical) occupy residues 152–172 (FFHFVLLCFAIGALLVCYHYY) and 179–199 (LGVGLLTFASLETIGIYFGLV).

Its subcellular location is the membrane. This chain is Transmembrane protein 40 (Tmem40), found in Mus musculus (Mouse).